The primary structure comprises 340 residues: Dihydroorotate dehydrogenase (quinone) (340 aa).

FMN contacts are provided by residues 62-66 (AGMDK) and threonine 86. A substrate-binding site is contributed by lysine 66. 111–115 (NRMGF) serves as a coordination point for substrate. Residues asparagine 139 and asparagine 172 each coordinate FMN. Asparagine 172 is a substrate binding site. Serine 175 serves as the catalytic Nucleophile. Position 177 (asparagine 177) interacts with substrate. FMN contacts are provided by lysine 217 and threonine 245. 246-247 (NT) is a binding site for substrate. Residues glycine 268, glycine 297, and 318–319 (YS) contribute to the FMN site.

Belongs to the dihydroorotate dehydrogenase family. Type 2 subfamily. As to quaternary structure, monomer. Requires FMN as cofactor.

It localises to the cell membrane. It catalyses the reaction (S)-dihydroorotate + a quinone = orotate + a quinol. The protein operates within pyrimidine metabolism; UMP biosynthesis via de novo pathway; orotate from (S)-dihydroorotate (quinone route): step 1/1. Catalyzes the conversion of dihydroorotate to orotate with quinone as electron acceptor. The sequence is that of Dihydroorotate dehydrogenase (quinone) from Shewanella woodyi (strain ATCC 51908 / MS32).